The primary structure comprises 298 residues: Replication protein A 32 kDa subunit B (298 aa).

The OB DNA-binding region spans V89–I163.

It belongs to the replication factor A protein 2 family. As to quaternary structure, heterotrimer of RPA1, RPA2 and RPA3 (canonical replication protein A complex). Interacts with RPA1A and RPA3. Post-translationally, phosphorylated in a cell-cycle-dependent manner (from the S phase until mitosis). In response to DNA damage, recruited to DNA-repair nuclear foci, as a hypophosphorylated form.

The protein resides in the nucleus. Component of the replication protein A complex (RPA) required for DNA recombination, repair and replication. The activity of RPA is mediated by single-stranded DNA binding and protein interactions. In Oryza sativa subsp. japonica (Rice), this protein is Replication protein A 32 kDa subunit B (RPA2B).